The following is a 533-amino-acid chain: Death domain-containing ATP nucleosidase (533 aa).

A death domain region spans residues 1–262 (MDAAAIISLL…TAAGKEEKVS (262 aa)). The disordered stretch occupies residues 184-248 (STFVSDDATQ…TQTSTNSFNS (65 aa)). Polar residues predominate over residues 218–227 (PSAQVNQPPT). Low complexity predominate over residues 236–248 (SGSTQTSTNSFNS). The interval 263–533 (DDVTKGIKFL…HLDDDRTIHM (271 aa)) is purine nucleoside phosphorylase domain.

It catalyses the reaction ATP + H2O = D-ribose 5-triphosphate + adenine. The enzyme catalyses dATP + H2O = 2-deoxyribose 5-triphosphate + adenine. The C-terminal purine nucleoside phosphorylase (PNP) domain cleaves the N-glycosidic bond of ATP, and to a lesser extent dATP, to release adenine and a sugar triphosphate; has weak activity on ADP and AMP and no activity on dADP, dAMP, adenosine, deoxyadenosine or other (d)NTPs. This Amphimedon queenslandica (Sponge) protein is Death domain-containing ATP nucleosidase (109585858).